The sequence spans 356 residues: Probable butyrate kinase (356 aa).

The protein belongs to the acetokinase family.

The protein resides in the cytoplasm. It catalyses the reaction butanoate + ATP = butanoyl phosphate + ADP. This is Probable butyrate kinase from Coprothermobacter proteolyticus (strain ATCC 35245 / DSM 5265 / OCM 4 / BT).